The chain runs to 441 residues: Ribosomal protein uS12 methylthiotransferase RimO (441 aa).

The MTTase N-terminal domain maps to 8–118; the sequence is PKIGFVSLGC…VLQHVHHYVP (111 aa). 6 residues coordinate [4Fe-4S] cluster: C17, C53, C82, C150, C154, and C157. The region spanning 136–373 is the Radical SAM core domain; the sequence is LTPRHYAYLK…MQLQQQISAE (238 aa). One can recognise a TRAM domain in the interval 376–441; the sequence is QEKVGREILV…DEYDLWGSRV (66 aa).

It belongs to the methylthiotransferase family. RimO subfamily. [4Fe-4S] cluster serves as cofactor.

The protein resides in the cytoplasm. It catalyses the reaction L-aspartate(89)-[ribosomal protein uS12]-hydrogen + (sulfur carrier)-SH + AH2 + 2 S-adenosyl-L-methionine = 3-methylsulfanyl-L-aspartate(89)-[ribosomal protein uS12]-hydrogen + (sulfur carrier)-H + 5'-deoxyadenosine + L-methionine + A + S-adenosyl-L-homocysteine + 2 H(+). Functionally, catalyzes the methylthiolation of an aspartic acid residue of ribosomal protein uS12. This is Ribosomal protein uS12 methylthiotransferase RimO from Salmonella arizonae (strain ATCC BAA-731 / CDC346-86 / RSK2980).